Reading from the N-terminus, the 565-residue chain is Putative serine protease pcp-1 (565 aa).

The first 17 residues, 1 to 17 (MRWFLVLLLVALVSVEA), serve as a signal peptide directing secretion. 3 N-linked (GlcNAc...) asparagine glycosylation sites follow: Asn69, Asn107, and Asn126. The Charge relay system role is filled by Ser177. Asn240, Asn244, Asn257, Asn271, Asn319, and Asn347 each carry an N-linked (GlcNAc...) asparagine glycan. Active-site charge relay system residues include Asp451 and His479.

The protein belongs to the peptidase S28 family.

This Caenorhabditis elegans protein is Putative serine protease pcp-1 (pcp-1).